The primary structure comprises 288 residues: ATP synthase gamma chain (288 aa).

This sequence belongs to the ATPase gamma chain family. F-type ATPases have 2 components, CF(1) - the catalytic core - and CF(0) - the membrane proton channel. CF(1) has five subunits: alpha(3), beta(3), gamma(1), delta(1), epsilon(1). CF(0) has three main subunits: a, b and c.

It localises to the cell inner membrane. In terms of biological role, produces ATP from ADP in the presence of a proton gradient across the membrane. The gamma chain is believed to be important in regulating ATPase activity and the flow of protons through the CF(0) complex. The chain is ATP synthase gamma chain from Blochmanniella floridana.